We begin with the raw amino-acid sequence, 114 residues long: Large ribosomal subunit protein uL22 (114 aa).

Belongs to the universal ribosomal protein uL22 family. In terms of assembly, part of the 50S ribosomal subunit.

Its function is as follows. This protein binds specifically to 23S rRNA; its binding is stimulated by other ribosomal proteins, e.g. L4, L17, and L20. It is important during the early stages of 50S assembly. It makes multiple contacts with different domains of the 23S rRNA in the assembled 50S subunit and ribosome. In terms of biological role, the globular domain of the protein is located near the polypeptide exit tunnel on the outside of the subunit, while an extended beta-hairpin is found that lines the wall of the exit tunnel in the center of the 70S ribosome. This is Large ribosomal subunit protein uL22 from Desulfosudis oleivorans (strain DSM 6200 / JCM 39069 / Hxd3) (Desulfococcus oleovorans).